A 139-amino-acid chain; its full sequence is MRVMGLDVGSKTVGVAISDPLGFTAQGVEIIKINEEAKEFGFDRLGELVKEYQVDKFVVGLPKNMNNTEGPRVEASKAYGDKIKEIFNLPVDYQDERLTTVQAERMLVEQADVSRDKRKKVIDKLAAQLILQNYLDRMF.

The protein belongs to the YqgF nuclease family.

The protein localises to the cytoplasm. Functionally, could be a nuclease involved in processing of the 5'-end of pre-16S rRNA. The polypeptide is Putative pre-16S rRNA nuclease (Streptococcus thermophilus (strain ATCC BAA-491 / LMD-9)).